A 1160-amino-acid polypeptide reads, in one-letter code: Major DNA-binding protein (1160 aa).

The short motif at 808–809 (FW) is the Required for filament formation element. The interval 1139-1160 (ARGGEHAFDEDCGLLPAKRGRL) is required for nuclear localization.

This sequence belongs to the herpesviridae major DNA-binding protein family. In terms of assembly, homooligomers. Forms double-helical filaments necessary for the formation of replication compartments within the host nucleus. Interacts with the origin-binding protein. Interacts with the helicase primase complex; this interaction stimulates primer synthesis activity of the helicase-primase complex. Interacts with the DNA polymerase. Interacts with the alkaline exonuclease; this interaction increases its nuclease processivity.

Its subcellular location is the host nucleus. In terms of biological role, single-stranded DNA-binding protein required for DNA replication. Functionally, plays several crucial roles in viral infection. Participates in the opening of the viral DNA origin to initiate replication by interacting with the origin-binding protein. May disrupt loops, hairpins and other secondary structures present on ssDNA to reduce and eliminate pausing of viral DNA polymerase at specific sites during elongation. Promotes viral DNA recombination by performing strand-transfer, characterized by the ability to transfer a DNA strand from a linear duplex to a complementary single-stranded DNA circle. Can also catalyze the renaturation of complementary single strands. Additionally, reorganizes the host cell nucleus, leading to the formation of prereplicative sites and replication compartments. This process is driven by the protein which can form double-helical filaments in the absence of DNA. In Simian cytomegalovirus (strain Colburn), this protein is Major DNA-binding protein.